The chain runs to 73 residues: Serine rich endogenous peptide 1 (73 aa).

The first 28 residues, 1 to 28, serve as a signal peptide directing secretion; the sequence is MGMSGSSGLVHVLMLLLLLSILFHHTES. The interval 48-73 is disordered; it reads YKPNTAVETPPSRSRRGGGGQNTGAD. Positions 53-67 match the SCOOP motif motif; sequence AVETPPSRSRRGGGG. The SxS motif essential for MIK2 binding motif lies at 59-61; sequence SRS. Gly residues predominate over residues 64 to 73; sequence GGGGQNTGAD.

The protein belongs to the serine rich endogenous peptide (SCOOP) phytocytokine family. As to quaternary structure, interacts with MIK2 (via extracellular leucine-rich repeat domain); this interaction triggers the formation of complex between MIK2 and the BAK1/SERK3 and SERK4 coreceptors, and subsequent BAK1 activation by phosphorylation. Mostly expressed in leaves and flowers, and, to a lower extent, in seedlings shoots.

It localises to the cell membrane. Its subcellular location is the secreted. It is found in the extracellular space. The protein resides in the apoplast. Brassicaceae-specific phytocytokine (plant endogenous peptide released into the apoplast) perceived by MIK2 in a BAK1/SERK3 and SERK4 coreceptors-dependent manner, that modulates various physiological and antimicrobial processes including growth prevention and reactive oxygen species (ROS) response regulation. This chain is Serine rich endogenous peptide 1, found in Arabidopsis thaliana (Mouse-ear cress).